We begin with the raw amino-acid sequence, 688 residues long: DNA ligase (688 aa).

NAD(+) is bound by residues Asp51 to Asp55, Ser100 to Leu101, and Glu129. Lys131 serves as the catalytic N6-AMP-lysine intermediate. Arg152, Glu189, Lys308, and Lys332 together coordinate NAD(+). The Zn(2+) site is built by Cys426, Cys429, Cys444, and Cys450. One can recognise a BRCT domain in the interval Ala609–Ser688.

Belongs to the NAD-dependent DNA ligase family. LigA subfamily. Mg(2+) serves as cofactor. The cofactor is Mn(2+).

It carries out the reaction NAD(+) + (deoxyribonucleotide)n-3'-hydroxyl + 5'-phospho-(deoxyribonucleotide)m = (deoxyribonucleotide)n+m + AMP + beta-nicotinamide D-nucleotide.. Its function is as follows. DNA ligase that catalyzes the formation of phosphodiester linkages between 5'-phosphoryl and 3'-hydroxyl groups in double-stranded DNA using NAD as a coenzyme and as the energy source for the reaction. It is essential for DNA replication and repair of damaged DNA. The protein is DNA ligase of Shewanella sp. (strain MR-4).